The primary structure comprises 146 residues: Lipoprotein signal peptidase (146 aa).

The next 3 membrane-spanning stretches (helical) occupy residues 6–26 (IFLL…TLFL), 50–70 (MFAF…GGIL), and 82–104 (YAFP…FVHA). Active-site residues include Asp-108 and Asp-125. The helical transmembrane segment at 123–143 (FADVAIDLAVAWILIMVYFFP) threads the bilayer.

It belongs to the peptidase A8 family.

It is found in the cell inner membrane. The enzyme catalyses Release of signal peptides from bacterial membrane prolipoproteins. Hydrolyzes -Xaa-Yaa-Zaa-|-(S,diacylglyceryl)Cys-, in which Xaa is hydrophobic (preferably Leu), and Yaa (Ala or Ser) and Zaa (Gly or Ala) have small, neutral side chains.. It participates in protein modification; lipoprotein biosynthesis (signal peptide cleavage). Its function is as follows. This protein specifically catalyzes the removal of signal peptides from prolipoproteins. The chain is Lipoprotein signal peptidase from Sulfurovum sp. (strain NBC37-1).